An 857-amino-acid chain; its full sequence is Autoinducer 2 sensor kinase/phosphatase LuxQ (857 aa).

2 helical membrane passes run 20-40 (IIFL…YYFS) and 283-303 (LGLA…RSWI). A Histidine kinase domain is found at 490 to 712 (KMSHEIRTPL…TFYLSIPVEK (223 aa)). A Phosphohistidine; by autocatalysis modification is found at His-493. Positions 735 to 850 (KVLLVEDNHT…ELHDELLHFK (116 aa)) constitute a Response regulatory domain. Asp-784 bears the 4-aspartylphosphate mark.

Binds the complex formed by the autoinducer and LuxP.

It localises to the cell inner membrane. The enzyme catalyses ATP + protein L-histidine = ADP + protein N-phospho-L-histidine.. In terms of biological role, at low cell density, in absence of autoinducer has a kinase activity, and autophosphorylates on a histidine residue. The phosphoryl group is then transferred to an aspartate residue in the response regulator domain. The phosphoryl group is transferred to LuxU, and ultimately to LuxO. At high cell density, in the presence of autoinducer, the kinase activity is inactivated, and the response regulator domain has a phosphatase activity. The chain is Autoinducer 2 sensor kinase/phosphatase LuxQ (luxQ) from Vibrio vulnificus (strain YJ016).